The chain runs to 179 residues: Crossover junction endodeoxyribonuclease RuvC (179 aa).

Residues D7, E67, and D139 contribute to the active site. Residues D7, E67, and D139 each coordinate Mg(2+).

The protein belongs to the RuvC family. In terms of assembly, homodimer which binds Holliday junction (HJ) DNA. The HJ becomes 2-fold symmetrical on binding to RuvC with unstacked arms; it has a different conformation from HJ DNA in complex with RuvA. In the full resolvosome a probable DNA-RuvA(4)-RuvB(12)-RuvC(2) complex forms which resolves the HJ. It depends on Mg(2+) as a cofactor.

It is found in the cytoplasm. The catalysed reaction is Endonucleolytic cleavage at a junction such as a reciprocal single-stranded crossover between two homologous DNA duplexes (Holliday junction).. Functionally, the RuvA-RuvB-RuvC complex processes Holliday junction (HJ) DNA during genetic recombination and DNA repair. Endonuclease that resolves HJ intermediates. Cleaves cruciform DNA by making single-stranded nicks across the HJ at symmetrical positions within the homologous arms, yielding a 5'-phosphate and a 3'-hydroxyl group; requires a central core of homology in the junction. The consensus cleavage sequence is 5'-(A/T)TT(C/G)-3'. Cleavage occurs on the 3'-side of the TT dinucleotide at the point of strand exchange. HJ branch migration catalyzed by RuvA-RuvB allows RuvC to scan DNA until it finds its consensus sequence, where it cleaves and resolves the cruciform DNA. The protein is Crossover junction endodeoxyribonuclease RuvC of Sorangium cellulosum (strain So ce56) (Polyangium cellulosum (strain So ce56)).